The following is an 80-amino-acid chain: Phosphoribosylformylglycinamidine synthase subunit PurS (80 aa).

This sequence belongs to the PurS family. As to quaternary structure, homodimer. Part of the FGAM synthase complex composed of 1 PurL, 1 PurQ and 2 PurS subunits.

The protein resides in the cytoplasm. The enzyme catalyses N(2)-formyl-N(1)-(5-phospho-beta-D-ribosyl)glycinamide + L-glutamine + ATP + H2O = 2-formamido-N(1)-(5-O-phospho-beta-D-ribosyl)acetamidine + L-glutamate + ADP + phosphate + H(+). The protein operates within purine metabolism; IMP biosynthesis via de novo pathway; 5-amino-1-(5-phospho-D-ribosyl)imidazole from N(2)-formyl-N(1)-(5-phospho-D-ribosyl)glycinamide: step 1/2. Part of the phosphoribosylformylglycinamidine synthase complex involved in the purines biosynthetic pathway. Catalyzes the ATP-dependent conversion of formylglycinamide ribonucleotide (FGAR) and glutamine to yield formylglycinamidine ribonucleotide (FGAM) and glutamate. The FGAM synthase complex is composed of three subunits. PurQ produces an ammonia molecule by converting glutamine to glutamate. PurL transfers the ammonia molecule to FGAR to form FGAM in an ATP-dependent manner. PurS interacts with PurQ and PurL and is thought to assist in the transfer of the ammonia molecule from PurQ to PurL. The polypeptide is Phosphoribosylformylglycinamidine synthase subunit PurS (Archaeoglobus fulgidus (strain ATCC 49558 / DSM 4304 / JCM 9628 / NBRC 100126 / VC-16)).